The sequence spans 157 residues: Phosphopantetheine adenylyltransferase (157 aa).

This sequence belongs to the eukaryotic CoaD family. In terms of assembly, monomer.

The protein resides in the cytoplasm. It catalyses the reaction (R)-4'-phosphopantetheine + ATP + H(+) = 3'-dephospho-CoA + diphosphate. Its pathway is cofactor biosynthesis; coenzyme A biosynthesis. Reversibly transfers an adenylyl group from ATP to 4'-phosphopantetheine, yielding dephospho-CoA (dPCoA) and pyrophosphate. In Pyrococcus abyssi (strain GE5 / Orsay), this protein is Phosphopantetheine adenylyltransferase.